The following is a 320-amino-acid chain: Ferrochelatase (320 aa).

The Fe cation site is built by H194 and E275.

This sequence belongs to the ferrochelatase family. As to quaternary structure, monomer.

The protein resides in the cytoplasm. The enzyme catalyses heme b + 2 H(+) = protoporphyrin IX + Fe(2+). It participates in porphyrin-containing compound metabolism; protoheme biosynthesis; protoheme from protoporphyrin-IX: step 1/1. Its function is as follows. Catalyzes the ferrous insertion into protoporphyrin IX. In Salmonella paratyphi A (strain ATCC 9150 / SARB42), this protein is Ferrochelatase.